The sequence spans 245 residues: tRNA1(Val) (adenine(37)-N6)-methyltransferase (245 aa).

Belongs to the methyltransferase superfamily. tRNA (adenine-N(6)-)-methyltransferase family.

The protein resides in the cytoplasm. It carries out the reaction adenosine(37) in tRNA1(Val) + S-adenosyl-L-methionine = N(6)-methyladenosine(37) in tRNA1(Val) + S-adenosyl-L-homocysteine + H(+). Its function is as follows. Specifically methylates the adenine in position 37 of tRNA(1)(Val) (anticodon cmo5UAC). The polypeptide is tRNA1(Val) (adenine(37)-N6)-methyltransferase (Citrobacter koseri (strain ATCC BAA-895 / CDC 4225-83 / SGSC4696)).